The sequence spans 856 residues: Beta-galactosidase 3 (856 aa).

The first 31 residues, 1 to 31, serve as a signal peptide directing secretion; it reads MREMGTGDSASRLILWFCLGFLILGVGFVQC. Residue E189 is the Proton donor of the active site. E258 acts as the Nucleophile in catalysis. A glycan (N-linked (GlcNAc...) asparagine) is linked at N468. The region spanning 760–846 is the SUEL-type lectin domain; the sequence is TFHRPKVHLK…KRLTVEAVCA (87 aa).

Belongs to the glycosyl hydrolase 35 family. In terms of tissue distribution, ubiquitous.

It localises to the secreted. The protein resides in the extracellular space. The protein localises to the apoplast. It carries out the reaction Hydrolysis of terminal non-reducing beta-D-galactose residues in beta-D-galactosides.. In Arabidopsis thaliana (Mouse-ear cress), this protein is Beta-galactosidase 3 (BGAL3).